The chain runs to 167 residues: Photosystem I assembly protein Ycf3 (167 aa).

TPR repeat units follow at residues 35-68 (AFAY…EVDA), 72-105 (SYIL…NPSL), and 120-153 (GEQA…APTS).

Belongs to the Ycf3 family.

It is found in the plastid. The protein resides in the chloroplast thylakoid membrane. In terms of biological role, essential for the assembly of the photosystem I (PSI) complex. May act as a chaperone-like factor to guide the assembly of the PSI subunits. In Chlorokybus atmophyticus (Soil alga), this protein is Photosystem I assembly protein Ycf3.